The primary structure comprises 489 residues: Rhamnulokinase (489 aa).

13-17 provides a ligand contact to ATP; it reads ASSGR. A disulfide bridge connects residues Cys68 and Cys222. Substrate-binding positions include Gly83 and 236-238; that span reads HDT. The active-site Proton acceptor is Asp237. Thr259 is an ATP binding site. A substrate-binding site is contributed by Asn296. Position 304 (Gln304) interacts with ATP. A disulfide bond links Cys353 and Cys370. An ATP-binding site is contributed by Gly402. A disulfide bond links Cys413 and Cys417.

It belongs to the rhamnulokinase family. Mg(2+) is required as a cofactor.

It carries out the reaction L-rhamnulose + ATP = L-rhamnulose 1-phosphate + ADP + H(+). The protein operates within carbohydrate degradation; L-rhamnose degradation; glycerone phosphate from L-rhamnose: step 2/3. Functionally, involved in the catabolism of L-rhamnose (6-deoxy-L-mannose). Catalyzes the transfer of the gamma-phosphate group from ATP to the 1-hydroxyl group of L-rhamnulose to yield L-rhamnulose 1-phosphate. This chain is Rhamnulokinase, found in Salmonella enteritidis PT4 (strain P125109).